The chain runs to 284 residues: Tropomyosin (284 aa).

Residues 1–284 (MDAIKKKMLA…DQTFAELAGY (284 aa)) adopt a coiled-coil conformation. The segment covering 202-213 (NNTKSLEISEQE) has biased composition (polar residues). The interval 202–223 (NNTKSLEISEQEASQREDSYEE) is disordered. Positions 214–223 (ASQREDSYEE) are enriched in basic and acidic residues.

It belongs to the tropomyosin family. In terms of assembly, homodimer.

In terms of biological role, tropomyosin, in association with the troponin complex, plays a central role in the calcium dependent regulation of muscle contraction. The polypeptide is Tropomyosin (Haliotis rufescens (California red abalone)).